A 182-amino-acid chain; its full sequence is ADP-ribosylation factor 3 (182 aa).

Gly2 carries the N-myristoyl glycine lipid modification. GTP contacts are provided by residues 24–31 (GLDNAGKT), 67–71 (DLGGQ), and 126–129 (NKQD).

It belongs to the small GTPase superfamily. Arf family. Interacts with GRIP; but preferentially when bound to GTP.

It localises to the golgi apparatus. In terms of biological role, GTP-binding protein involved in protein trafficking; may modulate vesicle budding and uncoating within the Golgi apparatus. The sequence is that of ADP-ribosylation factor 3 (ARF3) from Arabidopsis thaliana (Mouse-ear cress).